Reading from the N-terminus, the 603-residue chain is Membrane protein insertase YidC (603 aa).

The helical transmembrane segment at 7 to 27 threads the bilayer; it reads FFITIALSVLILAVWQYFYVL. The span at 38–51 shows a compositional bias: basic and acidic residues; it reads RVEQQRVEEQKKAA. Positions 38–76 are disordered; sequence RVEQQRVEEQKKAAEAANPGAGTPAPAPGTIPNAPGGDT. Residues 52 to 74 show a composition bias toward low complexity; that stretch reads EAANPGAGTPAPAPGTIPNAPGG. Helical transmembrane passes span 352–372, 378–398, 452–472, 497–517, and 540–560; these read FDLL…FWLI, FLGN…ALFF, WPVA…YITI, LFGL…WPLI, and IFTW…AGLV.

The protein belongs to the OXA1/ALB3/YidC family. Type 1 subfamily. As to quaternary structure, interacts with the Sec translocase complex via SecD. Specifically interacts with transmembrane segments of nascent integral membrane proteins during membrane integration.

The protein resides in the cell inner membrane. In terms of biological role, required for the insertion and/or proper folding and/or complex formation of integral membrane proteins into the membrane. Involved in integration of membrane proteins that insert both dependently and independently of the Sec translocase complex, as well as at least some lipoproteins. Aids folding of multispanning membrane proteins. The protein is Membrane protein insertase YidC of Mesorhizobium japonicum (strain LMG 29417 / CECT 9101 / MAFF 303099) (Mesorhizobium loti (strain MAFF 303099)).